A 252-amino-acid polypeptide reads, in one-letter code: 5'-nucleotidase SurE (252 aa).

A divalent metal cation contacts are provided by aspartate 8, aspartate 9, serine 39, and asparagine 91.

This sequence belongs to the SurE nucleotidase family. Requires a divalent metal cation as cofactor.

It is found in the cytoplasm. It carries out the reaction a ribonucleoside 5'-phosphate + H2O = a ribonucleoside + phosphate. Functionally, nucleotidase that shows phosphatase activity on nucleoside 5'-monophosphates. This Legionella pneumophila (strain Lens) protein is 5'-nucleotidase SurE.